The sequence spans 386 residues: Mannitol-1-phosphate 5-dehydrogenase (386 aa).

4 to 15 (AIHFGGGNIGRG) contacts NAD(+). Lysine 211 is a catalytic residue.

The protein belongs to the mannitol dehydrogenase family. In terms of assembly, monomer.

It carries out the reaction D-mannitol 1-phosphate + NAD(+) = beta-D-fructose 6-phosphate + NADH + H(+). Its function is as follows. Catalyzes the NAD(H)-dependent interconversion of D-fructose 6-phosphate and D-mannitol 1-phosphate in the mannitol metabolic pathway. This Emericella nidulans (strain FGSC A4 / ATCC 38163 / CBS 112.46 / NRRL 194 / M139) (Aspergillus nidulans) protein is Mannitol-1-phosphate 5-dehydrogenase (mpdA).